The sequence spans 103 residues: Matrix Gla protein (103 aa).

A signal peptide spans 1–19; it reads MRSLLLLTVLAALVVAILC. Glu-21 is modified (4-carboxyglutamate). Phosphoserine is present on residues Ser-22, Ser-25, and Ser-28. In terms of domain architecture, Gla spans 51–97; it reads MAKAQERVREQRKPAYELNREACDDYKLCERYAMVYGYNAAYNRYFR. 4-carboxyglutamate is present on residues Glu-56, Glu-60, Glu-67, and Glu-71. Cys-73 and Cys-79 are disulfide-bonded.

The protein belongs to the osteocalcin/matrix Gla protein family. Post-translationally, requires vitamin K-dependent gamma-carboxylation for its function.

The protein resides in the secreted. Associates with the organic matrix of bone and cartilage. Thought to act as an inhibitor of bone formation. The chain is Matrix Gla protein (MGP) from Oryctolagus cuniculus (Rabbit).